A 783-amino-acid polypeptide reads, in one-letter code: LPS-assembly protein LptD (783 aa).

The signal sequence occupies residues 1 to 24 (MSCFSRTFLAASISAALFAPQIQA).

The protein belongs to the LptD family. As to quaternary structure, component of the lipopolysaccharide transport and assembly complex. Interacts with LptE and LptA.

It localises to the cell outer membrane. Together with LptE, is involved in the assembly of lipopolysaccharide (LPS) at the surface of the outer membrane. This chain is LPS-assembly protein LptD, found in Vibrio cholerae serotype O1 (strain ATCC 39315 / El Tor Inaba N16961).